We begin with the raw amino-acid sequence, 204 residues long: Somatotropin (204 aa).

The signal sequence occupies residues 1–17 (MDRVVLLLSVLSLGVSS). A Pyrrolidone carboxylic acid modification is found at Q18. H36 is a Zn(2+) binding site. A disulfide bridge connects residues C69 and C177. E186 serves as a coordination point for Zn(2+). A disulfide bridge connects residues C194 and C202.

The protein belongs to the somatotropin/prolactin family.

The protein localises to the secreted. Its function is as follows. Growth hormone plays an important role in growth control and is involved in the regulation of several anabolic processes. Implicated as an osmoregulatory substance important for seawater adaptation. In Lates calcarifer (Barramundi), this protein is Somatotropin (gh).